A 562-amino-acid polypeptide reads, in one-letter code: Arginine--tRNA ligase (562 aa).

Positions 121 to 131 match the 'HIGH' region motif; it reads PNIAKPFSVGH.

The protein belongs to the class-I aminoacyl-tRNA synthetase family. Monomer.

Its subcellular location is the cytoplasm. The enzyme catalyses tRNA(Arg) + L-arginine + ATP = L-arginyl-tRNA(Arg) + AMP + diphosphate. In Streptococcus uberis (strain ATCC BAA-854 / 0140J), this protein is Arginine--tRNA ligase.